Consider the following 109-residue polypeptide: Small ribosomal subunit protein uS10 (109 aa).

Belongs to the universal ribosomal protein uS10 family. Part of the 30S ribosomal subunit.

Functionally, involved in the binding of tRNA to the ribosomes. This chain is Small ribosomal subunit protein uS10, found in Koribacter versatilis (strain Ellin345).